The primary structure comprises 769 residues: Serine protease HtrA-like (769 aa).

Positions 1–20 are enriched in basic residues; that stretch reads MDIGKKHVIPKSQYRRKRRE. Residues 1 to 390 form a disordered region; it reads MDIGKKHVIP…ATSKLNKGRA (390 aa). 2 stretches are compositionally biased toward basic and acidic residues: residues 21 to 64 and 71 to 108; these read FFHN…ERFK and LEQR…DVSK. Residues 126–137 are compositionally biased toward polar residues; that stretch reads YEQNSEATLSTK. The span at 138 to 186 shows a compositional bias: basic and acidic residues; it reads STDKVESSDMRKLSPDKNKVGHEEQHVLSKPSEHDKETRIDFESSRTDS. 2 stretches are compositionally biased toward polar residues: residues 202-221 and 247-262; these read GNES…NTVP and QQSQ…YGDS. Residues 264-295 show a composition bias toward basic and acidic residues; it reads QNDKSNHENDLSHHTPSKSDDKDNVMREDHIV. Polar residues predominate over residues 298-308; sequence NPDNDINTPSL. The segment covering 310–330 has biased composition (basic and acidic residues); sequence KIDDDRKLDEKIHVEDKHKQN. A compositionally biased stretch (polar residues) spans 331-347; that stretch reads ADSSETVGYQSQSSVSH. The span at 348–362 shows a compositional bias: basic and acidic residues; sequence RSTEKRNMAINDHHK. A compositionally biased stretch (polar residues) spans 366-390; sequence QKLNTKTSANNNQKKATSKLNKGRA. A helical transmembrane segment spans residues 410-430; that stretch reads LVILMGIIILIVILNAIFNNV. Active-site charge relay system residues include His-504, Asp-534, and Ser-619. The region spanning 680-733 is the PDZ domain; it reads IASLNSFERQAVKLPGKVKNGVVVDQVDNNGLADQSSLKKGDVITELDGKLLED.

Belongs to the peptidase S1C family.

It is found in the cell membrane. The protein is Serine protease HtrA-like of Staphylococcus aureus (strain bovine RF122 / ET3-1).